Consider the following 491-residue polypeptide: Protein nucleotidyltransferase YdiU (491 aa).

Gly88, Gly90, Arg91, Lys111, Asp123, Gly124, Arg174, and Arg181 together coordinate ATP. Asp250 serves as the catalytic Proton acceptor. Positions 251 and 260 each coordinate Mg(2+). Residue Asp260 participates in ATP binding.

It belongs to the SELO family. It depends on Mg(2+) as a cofactor. The cofactor is Mn(2+).

The catalysed reaction is L-seryl-[protein] + ATP = 3-O-(5'-adenylyl)-L-seryl-[protein] + diphosphate. The enzyme catalyses L-threonyl-[protein] + ATP = 3-O-(5'-adenylyl)-L-threonyl-[protein] + diphosphate. It catalyses the reaction L-tyrosyl-[protein] + ATP = O-(5'-adenylyl)-L-tyrosyl-[protein] + diphosphate. It carries out the reaction L-histidyl-[protein] + UTP = N(tele)-(5'-uridylyl)-L-histidyl-[protein] + diphosphate. The catalysed reaction is L-seryl-[protein] + UTP = O-(5'-uridylyl)-L-seryl-[protein] + diphosphate. The enzyme catalyses L-tyrosyl-[protein] + UTP = O-(5'-uridylyl)-L-tyrosyl-[protein] + diphosphate. Nucleotidyltransferase involved in the post-translational modification of proteins. It can catalyze the addition of adenosine monophosphate (AMP) or uridine monophosphate (UMP) to a protein, resulting in modifications known as AMPylation and UMPylation. In Bradyrhizobium diazoefficiens (strain JCM 10833 / BCRC 13528 / IAM 13628 / NBRC 14792 / USDA 110), this protein is Protein nucleotidyltransferase YdiU.